Here is a 22-residue protein sequence, read N- to C-terminus: Melittin-related peptide FQ-22-1 (22 aa).

A Glutamine amide modification is found at Gln22.

As to expression, expressed by the skin glands.

It is found in the secreted. This is Melittin-related peptide FQ-22-1 from Rana arvalis (Moor frog).